Reading from the N-terminus, the 243-residue chain is MGRAFEFRKARKFKRWGNMARVFTKLGKEITIAAKQGGPEPENNPRLRVLMQNAKKENMPKENVERAIKRAVSKDFTDYKEMNYEGYGPFGIAIFVETATDNTTRTVANVRSYFNKNGGSLGTSGSLEFLFDHKCVFHIAKKEDLSLEDLELELIDFGVDEVEEDEDEVVLYGEFAQNSAIQKYLEENGFEILSSEFVRIPNDLKEVTPEQRESIEKIIEKLEEDEDVQNVFHNMKEDDSEEE.

Belongs to the TACO1 family.

It localises to the cytoplasm. The chain is Probable transcriptional regulatory protein BDI_1233 from Parabacteroides distasonis (strain ATCC 8503 / DSM 20701 / CIP 104284 / JCM 5825 / NCTC 11152).